The sequence spans 380 residues: Cytochrome b (380 aa).

4 consecutive transmembrane segments (helical) span residues 34–54 (FGSL…LLAM), 78–99 (WLIR…FLHI), 114–134 (WNTG…GYVL), and 179–199 (FFAL…IHLT). Heme b-binding residues include histidine 84 and histidine 98. Residues histidine 183 and histidine 197 each contribute to the heme b site. Histidine 202 contacts a ubiquinone. 4 consecutive transmembrane segments (helical) span residues 227–247 (LKDI…ALFS), 289–309 (LGGV…PFLH), 321–341 (LSQI…WIGS), and 348–368 (FIII…ILFP).

Belongs to the cytochrome b family. As to quaternary structure, the cytochrome bc1 complex contains 11 subunits: 3 respiratory subunits (MT-CYB, CYC1 and UQCRFS1), 2 core proteins (UQCRC1 and UQCRC2) and 6 low-molecular weight proteins (UQCRH/QCR6, UQCRB/QCR7, UQCRQ/QCR8, UQCR10/QCR9, UQCR11/QCR10 and a cleavage product of UQCRFS1). This cytochrome bc1 complex then forms a dimer. Requires heme b as cofactor.

The protein localises to the mitochondrion inner membrane. In terms of biological role, component of the ubiquinol-cytochrome c reductase complex (complex III or cytochrome b-c1 complex) that is part of the mitochondrial respiratory chain. The b-c1 complex mediates electron transfer from ubiquinol to cytochrome c. Contributes to the generation of a proton gradient across the mitochondrial membrane that is then used for ATP synthesis. The polypeptide is Cytochrome b (MT-CYB) (Polyplectron bicalcaratum (Grey peacock-pheasant)).